The sequence spans 294 residues: Nucleotide-binding protein Smlt1108 (294 aa).

16 to 23 lines the ATP pocket; it reads GLSGSGKS. 69–72 serves as a coordination point for GTP; it reads DVRG.

This sequence belongs to the RapZ-like family.

Functionally, displays ATPase and GTPase activities. This Stenotrophomonas maltophilia (strain K279a) protein is Nucleotide-binding protein Smlt1108.